The sequence spans 526 residues: Vang-like protein 1 (526 aa).

A compositionally biased stretch (low complexity) spans 1–15; it reads MDTESTYSGYSYYSS. The tract at residues 1 to 87 is disordered; sequence MDTESTYSGY…TTAITGTSEH (87 aa). The Cytoplasmic segment spans residues 1–114; sequence MDTESTYSGY…VGLDCKRYLG (114 aa). Residues 75–87 show a composition bias toward polar residues; it reads GETTTAITGTSEH. Residues Ser-88 and Ser-90 each carry the phosphoserine modification. Residues 115 to 135 traverse the membrane as a helical segment; sequence LTVASFLGLLVFLTPIAFILL. Residues 136–153 are Extracellular-facing; sequence PQILWREELKPCGAICEG. Residues 154–174 form a helical membrane-spanning segment; it reads LLISVSFKLLILLIGTWALFF. The Cytoplasmic portion of the chain corresponds to 175-184; that stretch reads RKQRADVPRV. Residues 185-205 traverse the membrane as a helical segment; it reads FVFRALLLVLIFLFVVSYWLF. The Extracellular portion of the chain corresponds to 206-224; the sequence is YGVRILDSRDQNYKDIVQY. The chain crosses the membrane as a helical span at residues 225 to 245; sequence AVSLVDALLFIHYLAIVLLEL. Topologically, residues 246-526 are cytoplasmic; it reads RQLQPMFTLQ…VLRLQSETSV (281 aa).

Belongs to the Vang family. Heterodimer with Vangl2. Interacts through its C-terminal region with the N-terminal half of DVL1, DVL2 and DVL3. The PDZ domain of DVL1, DVL2 and DVL3 is required for the interaction.

Its subcellular location is the cell membrane. This Mus musculus (Mouse) protein is Vang-like protein 1 (Vangl1).